The chain runs to 195 residues: ATP-dependent Clp protease proteolytic subunit (195 aa).

Ser-98 acts as the Nucleophile in catalysis. His-123 is an active-site residue.

The protein belongs to the peptidase S14 family. In terms of assembly, fourteen ClpP subunits assemble into 2 heptameric rings which stack back to back to give a disk-like structure with a central cavity, resembling the structure of eukaryotic proteasomes.

The protein resides in the cytoplasm. It carries out the reaction Hydrolysis of proteins to small peptides in the presence of ATP and magnesium. alpha-casein is the usual test substrate. In the absence of ATP, only oligopeptides shorter than five residues are hydrolyzed (such as succinyl-Leu-Tyr-|-NHMec, and Leu-Tyr-Leu-|-Tyr-Trp, in which cleavage of the -Tyr-|-Leu- and -Tyr-|-Trp bonds also occurs).. Cleaves peptides in various proteins in a process that requires ATP hydrolysis. Has a chymotrypsin-like activity. Plays a major role in the degradation of misfolded proteins. The protein is ATP-dependent Clp protease proteolytic subunit of Thermodesulfovibrio yellowstonii (strain ATCC 51303 / DSM 11347 / YP87).